The following is an 86-amino-acid chain: Neurotoxin-like protein pMD18-NTL3 (86 aa).

Positions 1–21 are cleaved as a signal peptide; the sequence is MKTLLLTLVVLTIACLDLGYT. 4 disulfide bridges follow: cysteine 24/cysteine 45, cysteine 38/cysteine 62, cysteine 66/cysteine 78, and cysteine 79/cysteine 84.

This sequence belongs to the three-finger toxin family. Short-chain subfamily. Orphan group IX sub-subfamily. Expressed by the venom gland.

The protein localises to the secreted. This is Neurotoxin-like protein pMD18-NTL3 from Bungarus multicinctus (Many-banded krait).